Consider the following 262-residue polypeptide: Tryptophan synthase alpha chain (262 aa).

Residues glutamate 49 and aspartate 60 each act as proton acceptor in the active site.

This sequence belongs to the TrpA family. In terms of assembly, tetramer of two alpha and two beta chains.

The catalysed reaction is (1S,2R)-1-C-(indol-3-yl)glycerol 3-phosphate + L-serine = D-glyceraldehyde 3-phosphate + L-tryptophan + H2O. Its pathway is amino-acid biosynthesis; L-tryptophan biosynthesis; L-tryptophan from chorismate: step 5/5. Functionally, the alpha subunit is responsible for the aldol cleavage of indoleglycerol phosphate to indole and glyceraldehyde 3-phosphate. In Caldanaerobacter subterraneus subsp. tengcongensis (strain DSM 15242 / JCM 11007 / NBRC 100824 / MB4) (Thermoanaerobacter tengcongensis), this protein is Tryptophan synthase alpha chain.